Reading from the N-terminus, the 263-residue chain is Small ribosomal subunit protein eS4 (263 aa).

The S4 RNA-binding domain maps to 42-104; sequence LPLVIFLRNR…TNELFRLIYD (63 aa).

This sequence belongs to the eukaryotic ribosomal protein eS4 family.

This is Small ribosomal subunit protein eS4 (RpS4) from Bombyx mori (Silk moth).